We begin with the raw amino-acid sequence, 276 residues long: Diaminopimelate epimerase (276 aa).

The substrate site is built by asparagine 13, glutamine 46, and asparagine 66. Catalysis depends on cysteine 75, which acts as the Proton donor. Residues 76–77 (GN), asparagine 159, asparagine 192, and 210–211 (ER) contribute to the substrate site. The active-site Proton acceptor is cysteine 219. 220-221 (GS) is a substrate binding site.

This sequence belongs to the diaminopimelate epimerase family. In terms of assembly, homodimer.

The protein resides in the cytoplasm. It carries out the reaction (2S,6S)-2,6-diaminopimelate = meso-2,6-diaminopimelate. Its pathway is amino-acid biosynthesis; L-lysine biosynthesis via DAP pathway; DL-2,6-diaminopimelate from LL-2,6-diaminopimelate: step 1/1. Functionally, catalyzes the stereoinversion of LL-2,6-diaminopimelate (L,L-DAP) to meso-diaminopimelate (meso-DAP), a precursor of L-lysine and an essential component of the bacterial peptidoglycan. The sequence is that of Diaminopimelate epimerase from Coxiella burnetii (strain CbuK_Q154) (Coxiella burnetii (strain Q154)).